Reading from the N-terminus, the 183-residue chain is Threonylcarbamoyl-AMP synthase (183 aa).

The YrdC-like domain maps to M1–G183.

The protein belongs to the SUA5 family. TsaC subfamily.

It localises to the cytoplasm. The enzyme catalyses L-threonine + hydrogencarbonate + ATP = L-threonylcarbamoyladenylate + diphosphate + H2O. Required for the formation of a threonylcarbamoyl group on adenosine at position 37 (t(6)A37) in tRNAs that read codons beginning with adenine. Catalyzes the conversion of L-threonine, HCO(3)(-)/CO(2) and ATP to give threonylcarbamoyl-AMP (TC-AMP) as the acyladenylate intermediate, with the release of diphosphate. The chain is Threonylcarbamoyl-AMP synthase from Pasteurella multocida (strain Pm70).